The chain runs to 63 residues: Prokaryotic ubiquitin-like protein Pup 1 (63 aa).

2 stretches are compositionally biased toward basic and acidic residues: residues 1–12 (MSQEKVQRHGGG) and 24–33 (GQERREKLGE). The tract at residues 1–35 (MSQEKVQRHGGGDGEEESGPEAAGQERREKLGEDV) is disordered. The segment at 20-57 (PEAAGQERREKLGEDVDAILDEIDDVLEENAEDFVRAY) is ARC ATPase binding. Positions 25–51 (QERREKLGEDVDAILDEIDDVLEENAE) form a coiled coil. Deamidated glutamine is present on Q63. An Isoglutamyl lysine isopeptide (Gln-Lys) (interchain with K-? in acceptor proteins) cross-link involves residue Q63.

It belongs to the prokaryotic ubiquitin-like protein family. In terms of assembly, strongly interacts with the proteasome-associated ATPase ARC through a hydrophobic interface; the interacting region of Pup lies in its C-terminal half. There is one Pup binding site per ARC hexamer ring. Post-translationally, is modified by deamidation of its C-terminal glutamine to glutamate by the deamidase Dop, a prerequisite to the subsequent pupylation process.

Its pathway is protein degradation; proteasomal Pup-dependent pathway. Its function is as follows. Protein modifier that is covalently attached to lysine residues of substrate proteins, thereby targeting them for proteasomal degradation. The tagging system is termed pupylation. The sequence is that of Prokaryotic ubiquitin-like protein Pup 1 from Saccharopolyspora erythraea (strain ATCC 11635 / DSM 40517 / JCM 4748 / NBRC 13426 / NCIMB 8594 / NRRL 2338).